Here is a 267-residue protein sequence, read N- to C-terminus: Translation initiation factor 2 subunit alpha (267 aa).

The region spanning 12–83 (GEYVIATVKE…RRKTVDVSLK (72 aa)) is the S1 motif domain.

This sequence belongs to the eIF-2-alpha family. Heterotrimer composed of an alpha, a beta and a gamma chain.

EIF-2 functions in the early steps of protein synthesis by forming a ternary complex with GTP and initiator tRNA. In Staphylothermus marinus (strain ATCC 43588 / DSM 3639 / JCM 9404 / F1), this protein is Translation initiation factor 2 subunit alpha.